Here is a 702-residue protein sequence, read N- to C-terminus: Putative GMC-type oxidoreductase R135 (702 aa).

The chain crosses the membrane as a helical span at residues 55-75 (LTGDIVIIGAGAAGSLLAHYL). FAD is bound at residue 58 to 88 (DIVIIGAGAAGSLLAHYLARFSNMKIILLEA). His-628 is a catalytic residue.

This sequence belongs to the GMC oxidoreductase family. The cofactor is FAD.

The protein resides in the virion. It is found in the host membrane. The polypeptide is Putative GMC-type oxidoreductase R135 (Acanthamoeba polyphaga (Amoeba)).